A 958-amino-acid chain; its full sequence is Valine--tRNA ligase (958 aa).

Residues 42–52 carry the 'HIGH' region motif; that stretch reads PNVTGSLHMGH. A 'KMSKS' region motif is present at residues 554–558; that stretch reads KMSKS. Lys557 is a binding site for ATP. A coiled-coil region spans residues 887–956; it reads LVDVAAEMAR…TEQKAEFAKL (70 aa).

Belongs to the class-I aminoacyl-tRNA synthetase family. ValS type 1 subfamily. As to quaternary structure, monomer.

Its subcellular location is the cytoplasm. The catalysed reaction is tRNA(Val) + L-valine + ATP = L-valyl-tRNA(Val) + AMP + diphosphate. Its function is as follows. Catalyzes the attachment of valine to tRNA(Val). As ValRS can inadvertently accommodate and process structurally similar amino acids such as threonine, to avoid such errors, it has a 'posttransfer' editing activity that hydrolyzes mischarged Thr-tRNA(Val) in a tRNA-dependent manner. The sequence is that of Valine--tRNA ligase from Shewanella oneidensis (strain ATCC 700550 / JCM 31522 / CIP 106686 / LMG 19005 / NCIMB 14063 / MR-1).